Here is a 275-residue protein sequence, read N- to C-terminus: Bifunctional protein FolD (275 aa).

Residues 161–163, serine 186, and threonine 227 each bind NADP(+); that span reads GRS.

The protein belongs to the tetrahydrofolate dehydrogenase/cyclohydrolase family. In terms of assembly, homodimer.

The catalysed reaction is (6R)-5,10-methylene-5,6,7,8-tetrahydrofolate + NADP(+) = (6R)-5,10-methenyltetrahydrofolate + NADPH. The enzyme catalyses (6R)-5,10-methenyltetrahydrofolate + H2O = (6R)-10-formyltetrahydrofolate + H(+). It functions in the pathway one-carbon metabolism; tetrahydrofolate interconversion. In terms of biological role, catalyzes the oxidation of 5,10-methylenetetrahydrofolate to 5,10-methenyltetrahydrofolate and then the hydrolysis of 5,10-methenyltetrahydrofolate to 10-formyltetrahydrofolate. This Parafrankia sp. (strain EAN1pec) protein is Bifunctional protein FolD.